The chain runs to 280 residues: Eukaryotic translation initiation factor 3 subunit F-1 (280 aa).

Positions 8–138 (VRVHPVVLFQ…LRAYICIQLG (131 aa)) constitute an MPN domain.

This sequence belongs to the eIF-3 subunit F family. In terms of assembly, component of the eukaryotic translation initiation factor 3 (eIF-3) complex. The eIF-3 complex interacts with pix.

It is found in the cytoplasm. Component of the eukaryotic translation initiation factor 3 (eIF-3) complex, which is involved in protein synthesis of a specialized repertoire of mRNAs and, together with other initiation factors, stimulates binding of mRNA and methionyl-tRNAi to the 40S ribosome. The eIF-3 complex specifically targets and initiates translation of a subset of mRNAs involved in cell proliferation. In Drosophila mojavensis (Fruit fly), this protein is Eukaryotic translation initiation factor 3 subunit F-1.